The chain runs to 399 residues: Tyrosine--tRNA ligase (399 aa).

Residues 42–51 (PTAPDLHLGH) carry the 'HIGH' region motif. Residues 226-230 (KMSKS) carry the 'KMSKS' region motif. Lys-229 contacts ATP. The S4 RNA-binding domain occupies 336–396 (MPIAAVLNKA…GRKAFARITL (61 aa)).

The protein belongs to the class-I aminoacyl-tRNA synthetase family. TyrS type 2 subfamily. As to quaternary structure, homodimer.

The protein localises to the cytoplasm. The enzyme catalyses tRNA(Tyr) + L-tyrosine + ATP = L-tyrosyl-tRNA(Tyr) + AMP + diphosphate + H(+). Functionally, catalyzes the attachment of tyrosine to tRNA(Tyr) in a two-step reaction: tyrosine is first activated by ATP to form Tyr-AMP and then transferred to the acceptor end of tRNA(Tyr). This is Tyrosine--tRNA ligase from Pseudomonas fluorescens (strain ATCC BAA-477 / NRRL B-23932 / Pf-5).